A 270-amino-acid polypeptide reads, in one-letter code: tRNA pseudouridine synthase A (270 aa).

Residue aspartate 51 is the Nucleophile of the active site. A substrate-binding site is contributed by tyrosine 109.

The protein belongs to the tRNA pseudouridine synthase TruA family. Homodimer.

It catalyses the reaction uridine(38/39/40) in tRNA = pseudouridine(38/39/40) in tRNA. Functionally, formation of pseudouridine at positions 38, 39 and 40 in the anticodon stem and loop of transfer RNAs. The protein is tRNA pseudouridine synthase A of Burkholderia orbicola (strain MC0-3).